The primary structure comprises 410 residues: Chitin deacetylase 3 (410 aa).

The signal sequence occupies residues M1–A18. Residues A19–R39 constitute a propeptide that is removed on maturation. N61 and N80 each carry an N-linked (GlcNAc...) asparagine glycan. The NodB homology domain maps to K124–K314. D131 (proton acceptor) is an active-site residue. D131 lines the acetate pocket. D132 is a binding site for Co(2+). N149 carries N-linked (GlcNAc...) asparagine glycosylation. Residues H183 and H187 each contribute to the Co(2+) site. Y225 lines the acetate pocket. An N-linked (GlcNAc...) asparagine glycan is attached at N279. H289 acts as the Proton donor in catalysis. N-linked (GlcNAc...) asparagine glycosylation occurs at N293. Residue S385 is the site of GPI-anchor amidated serine attachment. A propeptide spans S386–V410 (removed in mature form).

The protein belongs to the polysaccharide deacetylase family. Requires Co(2+) as cofactor.

The protein localises to the cell membrane. The catalysed reaction is [(1-&gt;4)-N-acetyl-beta-D-glucosaminyl](n) + n H2O = chitosan + n acetate. In terms of biological role, hydrolyzes the N-acetamido groups of N-acetyl-D-glucosamine residues in chitin to form chitosan and acetate. Chitosan is required to anchor melanin to the cell wall, for maintenance of cell wall integrity, and for proper cytokinesis. Chitosan offers an advantage during infection as it is less readily detected than chitin by host immunosurveillance mechanisms. The polypeptide is Chitin deacetylase 3 (Cryptococcus neoformans var. neoformans serotype D (strain B-3501A) (Filobasidiella neoformans)).